The chain runs to 198 residues: Protein XA-1 (198 aa).

The N-terminal stretch at M1–P18 is a signal peptide. The interval L17–H198 is disordered. Pro residues predominate over residues F29–V44. Residues H46–R59 show a composition bias toward basic and acidic residues. The segment covering G76–K86 has biased composition (basic residues). Residues H95 to D104 show a composition bias toward basic and acidic residues. A compositionally biased stretch (basic residues) spans H134 to K145. Residues N181 to H198 are compositionally biased toward basic and acidic residues.

As to expression, expressed in the periphery of the cement gland as well as in the region of the hatching gland.

Its subcellular location is the secreted. This Xenopus laevis (African clawed frog) protein is Protein XA-1.